We begin with the raw amino-acid sequence, 149 residues long: Ribonuclease HI (149 aa).

The RNase H type-1 domain occupies M1–R142. Mg(2+)-binding residues include D10, E48, D70, and D134.

It belongs to the RNase H family. As to quaternary structure, monomer. Mg(2+) is required as a cofactor.

Its subcellular location is the cytoplasm. It catalyses the reaction Endonucleolytic cleavage to 5'-phosphomonoester.. Its function is as follows. Endonuclease that specifically degrades the RNA of RNA-DNA hybrids. The chain is Ribonuclease HI from Caulobacter vibrioides (strain ATCC 19089 / CIP 103742 / CB 15) (Caulobacter crescentus).